The sequence spans 196 residues: Peptide deformylase (196 aa).

2 residues coordinate Fe cation: cysteine 123 and histidine 166. Residue glutamate 167 is part of the active site. Histidine 170 is a Fe cation binding site.

This sequence belongs to the polypeptide deformylase family. Fe(2+) is required as a cofactor.

The enzyme catalyses N-terminal N-formyl-L-methionyl-[peptide] + H2O = N-terminal L-methionyl-[peptide] + formate. Removes the formyl group from the N-terminal Met of newly synthesized proteins. Requires at least a dipeptide for an efficient rate of reaction. N-terminal L-methionine is a prerequisite for activity but the enzyme has broad specificity at other positions. This chain is Peptide deformylase, found in Lactococcus lactis subsp. lactis (strain IL1403) (Streptococcus lactis).